The following is a 1451-amino-acid chain: Dicer-like protein 2 (1451 aa).

The segment at 34–53 (YDGHLSEEDSPGGKPRPKEQ) is disordered. Residues 70 to 247 (MLEASLKENI…LKRLESTLDA (178 aa)) form the Helicase ATP-binding domain. Residue 83 to 90 (MDTGSGKT) participates in ATP binding. The DEAH box motif lies at 190–193 (DEAH). The Helicase C-terminal domain occupies 412-582 (KVQRIIEVLL…RLEAIENSEA (171 aa)). The 102-residue stretch at 603 to 704 (AKSHLQHFVS…LPLRDRLELE (102 aa)) folds into the Dicer dsRNA-binding fold domain. RNase III domains lie at 968–1111 (AAEL…VDGG) and 1153–1351 (LQLL…VDAG). Glutamate 1192 provides a ligand contact to Mg(2+). Positions 1253 to 1272 (EGDSDSKSSGDSTSDKASPR) are disordered. Mg(2+) is bound by residues aspartate 1337 and glutamate 1340.

It belongs to the helicase family. Dicer subfamily. Mg(2+) serves as cofactor. The cofactor is Mn(2+).

In terms of biological role, dicer-like endonuclease involved in cleaving double-stranded RNA in the RNA interference (RNAi) pathway. Produces 21 to 25 bp dsRNAs (siRNAs) which target the selective destruction of homologous RNAs leading to sequence-specific suppression of gene expression, called post-transcriptional gene silencing (PTGS). Part of a broad host defense, DCL-2 is involved in antiviral defense against mycoviruses like the hypovirus CHV1-EP713 and the reovirus MyRV1-Cp9B21. This Cryphonectria parasitica (Chestnut blight fungus) protein is Dicer-like protein 2 (DCL-2).